A 237-amino-acid chain; its full sequence is 1-(5-phosphoribosyl)-5-[(5-phosphoribosylamino)methylideneamino] imidazole-4-carboxamide isomerase (237 aa).

Aspartate 8 (proton acceptor) is an active-site residue. The Proton donor role is filled by aspartate 129.

This sequence belongs to the HisA/HisF family.

The protein localises to the cytoplasm. The enzyme catalyses 1-(5-phospho-beta-D-ribosyl)-5-[(5-phospho-beta-D-ribosylamino)methylideneamino]imidazole-4-carboxamide = 5-[(5-phospho-1-deoxy-D-ribulos-1-ylimino)methylamino]-1-(5-phospho-beta-D-ribosyl)imidazole-4-carboxamide. It participates in amino-acid biosynthesis; L-histidine biosynthesis; L-histidine from 5-phospho-alpha-D-ribose 1-diphosphate: step 4/9. This is 1-(5-phosphoribosyl)-5-[(5-phosphoribosylamino)methylideneamino] imidazole-4-carboxamide isomerase from Alkaliphilus metalliredigens (strain QYMF).